Reading from the N-terminus, the 94-residue chain is Large ribosomal subunit protein eL37 (94 aa).

Residues cysteine 19, cysteine 22, cysteine 34, and cysteine 37 each coordinate Zn(2+). The C4-type zinc-finger motif lies at 19 to 37; sequence CRRCGKATYHKQKLRCAAC.

This sequence belongs to the eukaryotic ribosomal protein eL37 family. Requires Zn(2+) as cofactor.

The protein resides in the cytoplasm. Functionally, binds to the 23S rRNA. This is Large ribosomal subunit protein eL37 (RPL37) from Tetrahymena thermophila (strain SB210).